A 43-amino-acid polypeptide reads, in one-letter code: Snaclec lebecetin subunit beta (43 aa).

Residues 1 to 43 (ALNCASGWSGGYDQHCYKVFDIPPSWAADEKFCKQQTSGGHLV) form the C-type lectin domain. Cysteine 4 and cysteine 16 form a disulfide bridge.

Heterodimer of subunits alpha and beta; disulfide-linked. Requires Ca(2+) as cofactor. Post-translationally, glycosylated. As to expression, expressed by the venom gland.

Its subcellular location is the secreted. Binds to the platelet GPIb/IX/V receptor system and inhibits ristocetin-induced platelet aggregation in human platelet-rich plasma. Strongly inhibits platelet aggregation induced by ADP, calcium ionophore, thrombin and collagen. Does not inhibit U46619-induced platelet aggregation. This Macrovipera lebetinus (Levantine viper) protein is Snaclec lebecetin subunit beta.